The following is a 692-amino-acid chain: Elongation factor G (692 aa).

The tr-type G domain occupies 8–282; sequence ERTRNIGIMA…AIVYYLPSPV (275 aa). GTP is bound by residues 17 to 24, 81 to 85, and 135 to 138; these read AHIDAGKT, DTPGH, and NKMD.

The protein belongs to the TRAFAC class translation factor GTPase superfamily. Classic translation factor GTPase family. EF-G/EF-2 subfamily.

Its subcellular location is the cytoplasm. Functionally, catalyzes the GTP-dependent ribosomal translocation step during translation elongation. During this step, the ribosome changes from the pre-translocational (PRE) to the post-translocational (POST) state as the newly formed A-site-bound peptidyl-tRNA and P-site-bound deacylated tRNA move to the P and E sites, respectively. Catalyzes the coordinated movement of the two tRNA molecules, the mRNA and conformational changes in the ribosome. This Carboxydothermus hydrogenoformans (strain ATCC BAA-161 / DSM 6008 / Z-2901) protein is Elongation factor G.